The chain runs to 505 residues: Lysine--tRNA ligase (505 aa).

Residues Glu-403 and Glu-410 each coordinate Mg(2+).

This sequence belongs to the class-II aminoacyl-tRNA synthetase family. As to quaternary structure, homodimer. The cofactor is Mg(2+).

The protein localises to the cytoplasm. The catalysed reaction is tRNA(Lys) + L-lysine + ATP = L-lysyl-tRNA(Lys) + AMP + diphosphate. In Methanospirillum hungatei JF-1 (strain ATCC 27890 / DSM 864 / NBRC 100397 / JF-1), this protein is Lysine--tRNA ligase.